The sequence spans 1526 residues: uncharacterized protein (1526 aa).

WD repeat units follow at residues Cys334–Ser376, Lys862–Thr901, Gly904–Lys945, Gly946–Ile985, Gly988–Ile1027, Gly1030–Thr1069, Gly1072–Thr1111, Gly1114–Thr1153, Gly1156–Ile1195, Gly1198–Thr1237, Gly1240–Thr1279, Gly1282–Thr1321, Gly1324–Thr1363, Gly1366–Thr1405, Gly1408–Thr1447, and Gly1450–Lys1491. Residues Met823–Lys862 enclose the Pentapeptide repeat domain.

This is an uncharacterized protein from Nostoc sp. (strain PCC 7120 / SAG 25.82 / UTEX 2576).